The sequence spans 607 residues: Polypeptide N-acetylgalactosaminyltransferase 18 (607 aa).

Over 1–12 the chain is Cytoplasmic; sequence MVCTRKTKTLVS. The chain crosses the membrane as a helical; Signal-anchor for type II membrane protein span at residues 13–35; that stretch reads TCVILSGMTNIICLLYVGWVTNY. Residues 36–607 are Lumenal-facing; sequence IASVYVRGQE…ITNVLRSLAS (572 aa). Cystine bridges form between Cys144–Cys377, Cys368–Cys447, Cys482–Cys498, Cys530–Cys543, and Cys571–Cys591. The N-linked (GlcNAc...) asparagine glycan is linked to Asn146. The tract at residues 153 to 267 is catalytic subdomain A; it reads LPEVSIVFIF…VGWAEPVLTR (115 aa). Asp194 lines the substrate pocket. The N-linked (GlcNAc...) asparagine glycan is linked to Asn195. Mn(2+) is bound by residues Asp251 and His253. An N-linked (GlcNAc...) asparagine glycan is attached at Asn320. A catalytic subdomain B region spans residues 324–385; the sequence is PIRSPALIGC…PCSRIAHIER (62 aa). Position 382 (His382) interacts with Mn(2+). Arg385 and Tyr390 together coordinate substrate. The Ricin B-type lectin domain maps to 469 to 599; the sequence is AYGVLQNSLK…KCSGQHWSIT (131 aa).

It belongs to the glycosyltransferase 2 family. GalNAc-T subfamily. The cofactor is Mn(2+).

It is found in the golgi apparatus membrane. The catalysed reaction is L-seryl-[protein] + UDP-N-acetyl-alpha-D-galactosamine = a 3-O-[N-acetyl-alpha-D-galactosaminyl]-L-seryl-[protein] + UDP + H(+). The enzyme catalyses L-threonyl-[protein] + UDP-N-acetyl-alpha-D-galactosamine = a 3-O-[N-acetyl-alpha-D-galactosaminyl]-L-threonyl-[protein] + UDP + H(+). Its pathway is protein modification; protein glycosylation. In terms of biological role, catalyzes the initial reaction in O-linked oligosaccharide biosynthesis, the transfer of an N-acetyl-D-galactosamine (GalNAc) residue from UDP-GalNAc to a serine or threonine residue on the protein receptor. The chain is Polypeptide N-acetylgalactosaminyltransferase 18 (GALNT18) from Homo sapiens (Human).